The following is a 257-amino-acid chain: Peptide methionine sulfoxide reductase (257 aa).

The tract at residues 61–88 is disordered; that stretch reads LGFGSRPQPDPAASSAIAQGPDDDVPSP. Ser-244 bears the Phosphoserine mark.

Belongs to the MsrA Met sulfoxide reductase family.

It carries out the reaction L-methionyl-[protein] + [thioredoxin]-disulfide + H2O = L-methionyl-(S)-S-oxide-[protein] + [thioredoxin]-dithiol. It catalyses the reaction [thioredoxin]-disulfide + L-methionine + H2O = L-methionine (S)-S-oxide + [thioredoxin]-dithiol. Has an important function as a repair enzyme for proteins that have been inactivated by oxidation. Catalyzes the reversible oxidation-reduction of methionine sulfoxide in proteins to methionine. In Brassica napus (Rape), this protein is Peptide methionine sulfoxide reductase (PMSR).